Here is a 54-residue protein sequence, read N- to C-terminus: Large ribosomal subunit protein bL33C (54 aa).

This sequence belongs to the bacterial ribosomal protein bL33 family.

The sequence is that of Large ribosomal subunit protein bL33C from Streptomyces griseus subsp. griseus (strain JCM 4626 / CBS 651.72 / NBRC 13350 / KCC S-0626 / ISP 5235).